A 1394-amino-acid polypeptide reads, in one-letter code: DNA-directed RNA polymerase subunit beta' (1394 aa).

Positions 71, 73, 86, and 89 each coordinate Zn(2+). Aspartate 462, aspartate 464, and aspartate 466 together coordinate Mg(2+). Positions 810, 884, 891, and 894 each coordinate Zn(2+).

The protein belongs to the RNA polymerase beta' chain family. As to quaternary structure, the RNAP catalytic core consists of 2 alpha, 1 beta, 1 beta' and 1 omega subunit. When a sigma factor is associated with the core the holoenzyme is formed, which can initiate transcription. Requires Mg(2+) as cofactor. Zn(2+) is required as a cofactor.

It carries out the reaction RNA(n) + a ribonucleoside 5'-triphosphate = RNA(n+1) + diphosphate. In terms of biological role, DNA-dependent RNA polymerase catalyzes the transcription of DNA into RNA using the four ribonucleoside triphosphates as substrates. The protein is DNA-directed RNA polymerase subunit beta' of Caulobacter sp. (strain K31).